The following is a 119-amino-acid chain: Large ribosomal subunit protein uL22c (119 aa).

This sequence belongs to the universal ribosomal protein uL22 family. As to quaternary structure, part of the 50S ribosomal subunit.

The protein localises to the plastid. Its subcellular location is the chloroplast. This protein binds specifically to 23S rRNA. Functionally, the globular domain of the protein is located near the polypeptide exit tunnel on the outside of the subunit, while an extended beta-hairpin is found that lines the wall of the exit tunnel in the center of the 70S ribosome. The polypeptide is Large ribosomal subunit protein uL22c (rpl22) (Mesostigma viride (Green alga)).